Reading from the N-terminus, the 169-residue chain is X polypeptide (169 aa).

It belongs to the IagB/IpgF/P19 family.

The protein is X polypeptide (X) of Escherichia coli.